Here is a 398-residue protein sequence, read N- to C-terminus: Acetate kinase 1 (398 aa).

N9 contributes to the Mg(2+) binding site. Residue K16 participates in ATP binding. A substrate-binding site is contributed by R89. The active-site Proton donor/acceptor is D146. ATP is bound by residues 206-210 (HLGNG), 281-283 (DCR), and 329-333 (GIGEN). Mg(2+) is bound at residue E384.

Belongs to the acetokinase family. Homodimer. Mg(2+) serves as cofactor. The cofactor is Mn(2+).

It is found in the cytoplasm. It carries out the reaction acetate + ATP = acetyl phosphate + ADP. The protein operates within metabolic intermediate biosynthesis; acetyl-CoA biosynthesis; acetyl-CoA from acetate: step 1/2. Functionally, catalyzes the formation of acetyl phosphate from acetate and ATP. Can also catalyze the reverse reaction. This is Acetate kinase 1 from Vibrio vulnificus (strain CMCP6).